Consider the following 546-residue polypeptide: MYDVIVVGAGWCGLAAAKTYLQTCPTARLLVVDGDSSIGGTWSKERLYPHLVAEAHYGLFEFSDLPMRREGILPDGRIPSAAVHAYLTEYATKFGLLPRIRLNTWIEDIRQDPTAIGDDKAPYWTLQVAGSSQPLQARKLIIATGLTSEPRMPSFPGREDFEGHVLHSKMMGRADTGKLLNDPSIRHVVVYGGSKSAFDAVYLLLRAGKTVDWVIREGGGGPSIMTPLNILGQPSFRLNNSRVMSLFSPNPFEVAGERSWWQRVMHQRAGTFAQLLVVWFWRVLAYLLQRPWKYDYSVNGKQLKPILGLDSVLWSPATLGVMTHPTLWEDIHSGERVTIRRQNITALGQNKHVVLSNGDRITADMVVCATGWHARHSLFTPDEQLAVGLPSTSSFDPKSQAHWLNLQKAADEEILEEFPLLQNCPIALPPVRCEDDHHLYRFVAPSSGPLAQERLIAYVGFLRTTGAPIVYEAQSLWATAYLTGALHVPALEEREKEVARTNAWIRRRYICGRKVPFALFDFLPYVDMLYRDLGVNSRRKKNAVSE.

The N-terminal stretch at 1–17 (MYDVIVVGAGWCGLAAA) is a signal peptide. I106 contacts FAD. 2 N-linked (GlcNAc...) asparagine glycosylation sites follow: N239 and N343.

Belongs to the FAD-binding monooxygenase family. Requires FAD as cofactor.

The protein operates within antifungal biosynthesis. In terms of biological role, FAD-dependent monooxygenase; part of the gene cluster that mediates the biosynthesis of the tetrahydropyranyl antifungal agent lanomycin that acts as an inhibitor of CYP51 and blocks the ergosterol biosynthesis. The biosynthesis probably begins with the formation of an hexaketide, followed by methionine mediated alkylation of C-2 and C-6, and methylation of the reduced C-3 oxygen, pyran forming reductive ring closure, oxygenation of C-4, beta-keto reduction, enoyl reduction and dehydration of the remaining oxygens, and finally, acylation with glycine to complete the biosynthesis. The polypeptide is FAD-dependent monooxygenase (Pyrenophora dematioidea (Helminthosporium dematioideum)).